The following is a 439-amino-acid chain: Glucan 1,3-beta-glucosidase (439 aa).

The first 18 residues, 1–18 (MLLSLLFLLSTFAFGALT), serve as a signal peptide directing secretion. The Proton donor role is filled by E227. Cystine bridges form between C311-C437 and C336-C366. The Nucleophile role is filled by E328.

It belongs to the glycosyl hydrolase 5 (cellulase A) family.

The protein resides in the secreted. The enzyme catalyses Successive hydrolysis of beta-D-glucose units from the non-reducing ends of (1-&gt;3)-beta-D-glucans, releasing alpha-glucose.. Functionally, beta-glucanases participate in the metabolism of beta-glucan, the main structural component of the cell wall. It could also function biosynthetically as a transglycosylase. In Lachancea kluyveri (strain ATCC 58438 / CBS 3082 / BCRC 21498 / NBRC 1685 / JCM 7257 / NCYC 543 / NRRL Y-12651) (Yeast), this protein is Glucan 1,3-beta-glucosidase (EXG1).